The primary structure comprises 585 residues: MIFPAEDVYFWSKFFATERAVSGVIIIFIYLGITSIFSYVLSFYIAKIYRDEPTFLRKLTGSVISFFEKIIGESENHQMEFKEYFINLLLFNFFAGLISFLVIMYQKYLPFSYYATGMSPSLDFNTVVSFLTNTNLQHYSNPFRLSYFSQTFVITGLMFLSAGTGFAASMAFVRGLRTDVGKIGNFYHDFLVSIFDLILPLSILVTIILILAGVPETIQRFISVTPFFTNNTVNIPLGPVATLEAIKNIGTNGGGFYGANAGFPFENPDWFTNLLEFVSFTIIPLGSLMALGIVFEDRKFGRMLYYVIMFFFVFDGLFAFFGEYVGVPFLHIGYYTGNMLGKETAIGVSQSSIFAVGATLTSTGASDGALVSYTPAGIIGVLIGLLLNDPLGGVGTGVLNIFMYIIFTVFIGSLMVGKLPELMSLRIGSKEIKYSTLSLVTHPLLVVIPLGITLMIPHLSSTFVNPNSSRITELLYEFASAASNNGSEMGGFLTNQPYFNYLDGVIMLLGRYLLMGFQLVIAQSFSIKKAKVQYLRSIDTSNSVFALLLISAMLIIGLLSYFPIIVLGPLLSWTHDFSLIVGAIL.

The next 12 helical transmembrane spans lie at 25-45 (IIIF…SFYI), 84-104 (YFIN…LVIM), 152-172 (FVIT…SMAF), 194-214 (IFDL…LAGV), 275-295 (LEFV…GIVF), 307-327 (VIMF…YVGV), 345-365 (AIGV…STGA), 368-388 (GALV…LLLN), 397-417 (GVLN…LMVG), 437-457 (LSLV…LMIP), 502-522 (LDGV…LVIA), and 547-567 (LLLI…IIVL).

Belongs to the KdpA family. As to quaternary structure, the system is composed of three essential subunits: KdpA, KdpB and KdpC.

It localises to the cell membrane. Its function is as follows. Part of the high-affinity ATP-driven potassium transport (or Kdp) system, which catalyzes the hydrolysis of ATP coupled with the electrogenic transport of potassium into the cytoplasm. This subunit binds the extracellular potassium ions and delivers the ions to the membrane domain of KdpB through an intramembrane tunnel. The polypeptide is Potassium-transporting ATPase potassium-binding subunit (Thermoplasma volcanium (strain ATCC 51530 / DSM 4299 / JCM 9571 / NBRC 15438 / GSS1)).